The chain runs to 371 residues: Alanine racemase (371 aa).

Lys39 serves as the catalytic Proton acceptor; specific for D-alanine. Lys39 bears the N6-(pyridoxal phosphate)lysine mark. Position 137 (Arg137) interacts with substrate. The active-site Proton acceptor; specific for L-alanine is the Tyr266. Substrate is bound at residue Met314.

The protein belongs to the alanine racemase family. The cofactor is pyridoxal 5'-phosphate.

The catalysed reaction is L-alanine = D-alanine. It participates in amino-acid biosynthesis; D-alanine biosynthesis; D-alanine from L-alanine: step 1/1. Catalyzes the interconversion of L-alanine and D-alanine. May also act on other amino acids. The sequence is that of Alanine racemase (alr) from Desulfovibrio desulfuricans (strain ATCC 27774 / DSM 6949 / MB).